The chain runs to 238 residues: Probable transcriptional regulatory protein llmg_0242 (238 aa).

This sequence belongs to the TACO1 family. YeeN subfamily.

The protein localises to the cytoplasm. This chain is Probable transcriptional regulatory protein llmg_0242, found in Lactococcus lactis subsp. cremoris (strain MG1363).